Here is a 163-residue protein sequence, read N- to C-terminus: Cyclic pyranopterin monophosphate synthase (163 aa).

Substrate contacts are provided by residues 78–80 and 116–117; these read LCH and ME. Asp131 is a catalytic residue.

Belongs to the MoaC family. In terms of assembly, homohexamer; trimer of dimers.

It carries out the reaction (8S)-3',8-cyclo-7,8-dihydroguanosine 5'-triphosphate = cyclic pyranopterin phosphate + diphosphate. It functions in the pathway cofactor biosynthesis; molybdopterin biosynthesis. In terms of biological role, catalyzes the conversion of (8S)-3',8-cyclo-7,8-dihydroguanosine 5'-triphosphate to cyclic pyranopterin monophosphate (cPMP). The polypeptide is Cyclic pyranopterin monophosphate synthase (Agrobacterium fabrum (strain C58 / ATCC 33970) (Agrobacterium tumefaciens (strain C58))).